Here is a 342-residue protein sequence, read N- to C-terminus: 4-hydroxy-2-oxovalerate aldolase (342 aa).

The region spanning 7–259 is the Pyruvate carboxyltransferase domain; sequence ILVHDMSLRD…CTGVDLGRIQ (253 aa). Substrate is bound at residue 15–16; sequence RD. Asp-16 serves as a coordination point for Mn(2+). His-19 (proton acceptor) is an active-site residue. 2 residues coordinate substrate: Ser-169 and His-198. Mn(2+) is bound by residues His-198 and His-200. Residue Tyr-289 participates in substrate binding.

It belongs to the 4-hydroxy-2-oxovalerate aldolase family.

It carries out the reaction (S)-4-hydroxy-2-oxopentanoate = acetaldehyde + pyruvate. The protein is 4-hydroxy-2-oxovalerate aldolase of Alkalilimnicola ehrlichii (strain ATCC BAA-1101 / DSM 17681 / MLHE-1).